The primary structure comprises 234 residues: Fibrillarin-like rRNA/tRNA 2'-O-methyltransferase (234 aa).

Residues 90-91 (TT), 109-110 (EF), 134-135 (DA), and 154-157 (DIAQ) contribute to the S-adenosyl-L-methionine site.

This sequence belongs to the methyltransferase superfamily. Fibrillarin family. As to quaternary structure, interacts with nop5. Component of box C/D small ribonucleoprotein (sRNP) particles that contain rpl7ae, FlpA and nop5, plus a guide RNA.

In terms of biological role, involved in pre-rRNA and tRNA processing. Utilizes the methyl donor S-adenosyl-L-methionine to catalyze the site-specific 2'-hydroxyl methylation of ribose moieties in rRNA and tRNA. Site specificity is provided by a guide RNA that base pairs with the substrate. Methylation occurs at a characteristic distance from the sequence involved in base pairing with the guide RNA. This chain is Fibrillarin-like rRNA/tRNA 2'-O-methyltransferase, found in Staphylothermus marinus (strain ATCC 43588 / DSM 3639 / JCM 9404 / F1).